Reading from the N-terminus, the 145-residue chain is Large ribosomal subunit protein uL15 (145 aa).

Residues 1–13 (MIRSKRKINKLRG) show a composition bias toward basic residues. Residues 1–44 (MIRSKRKINKLRGSRSNGGGCTKKRRGAGNKGGRGNAGASKQHW) form a disordered region.

The protein belongs to the universal ribosomal protein uL15 family. In terms of assembly, part of the 50S ribosomal subunit.

Binds to the 23S rRNA. The polypeptide is Large ribosomal subunit protein uL15 (Methanobrevibacter smithii (strain ATCC 35061 / DSM 861 / OCM 144 / PS)).